Consider the following 118-residue polypeptide: UPF0102 protein Franean1_1156 (118 aa).

It belongs to the UPF0102 family.

This chain is UPF0102 protein Franean1_1156, found in Parafrankia sp. (strain EAN1pec).